A 249-amino-acid chain; its full sequence is tRNA (guanine-N(1)-)-methyltransferase (249 aa).

S-adenosyl-L-methionine is bound by residues Gly-121 and Leu-141–Leu-146.

The protein belongs to the RNA methyltransferase TrmD family. As to quaternary structure, homodimer.

Its subcellular location is the cytoplasm. The catalysed reaction is guanosine(37) in tRNA + S-adenosyl-L-methionine = N(1)-methylguanosine(37) in tRNA + S-adenosyl-L-homocysteine + H(+). In terms of biological role, specifically methylates guanosine-37 in various tRNAs. In Cereibacter sphaeroides (strain ATCC 17023 / DSM 158 / JCM 6121 / CCUG 31486 / LMG 2827 / NBRC 12203 / NCIMB 8253 / ATH 2.4.1.) (Rhodobacter sphaeroides), this protein is tRNA (guanine-N(1)-)-methyltransferase.